A 607-amino-acid polypeptide reads, in one-letter code: Elongation factor 4 (607 aa).

In terms of domain architecture, tr-type G spans 11-193 (ENIRNFSIIA…KIVEVVPAPD (183 aa)). Residues 23–28 (DHGKST) and 140–143 (NKID) each bind GTP.

Belongs to the TRAFAC class translation factor GTPase superfamily. Classic translation factor GTPase family. LepA subfamily.

Its subcellular location is the cell membrane. The catalysed reaction is GTP + H2O = GDP + phosphate + H(+). In terms of biological role, required for accurate and efficient protein synthesis under certain stress conditions. May act as a fidelity factor of the translation reaction, by catalyzing a one-codon backward translocation of tRNAs on improperly translocated ribosomes. Back-translocation proceeds from a post-translocation (POST) complex to a pre-translocation (PRE) complex, thus giving elongation factor G a second chance to translocate the tRNAs correctly. Binds to ribosomes in a GTP-dependent manner. This is Elongation factor 4 from Staphylococcus aureus (strain N315).